Reading from the N-terminus, the 320-residue chain is Foldase protein PrsA (320 aa).

The first 20 residues, 1–20 (MKMINKLIVPVTASALLLGA), serve as a signal peptide directing secretion. Residue cysteine 21 is the site of N-palmitoyl cysteine attachment. Cysteine 21 carries S-diacylglycerol cysteine lipidation. The PpiC domain occupies 139-245 (EDSKKASHIL…FGYHIIKADK (107 aa)). A disordered region spans residues 159–198 (EGLDDKEAKQKAEEIQKEVSKDPSKFGEIAKKESMDTGSA).

This sequence belongs to the PrsA family.

It localises to the cell membrane. The catalysed reaction is [protein]-peptidylproline (omega=180) = [protein]-peptidylproline (omega=0). In terms of biological role, plays a major role in protein secretion by helping the post-translocational extracellular folding of several secreted proteins. In Staphylococcus aureus (strain MRSA252), this protein is Foldase protein PrsA.